Reading from the N-terminus, the 191-residue chain is Putative glutathione-dependent formaldehyde-activating enzyme (191 aa).

In terms of domain architecture, CENP-V/GFA spans 20–166 (FPGGNLYCLC…FQSLGLQTYD (147 aa)). Residues C27, C29, C48, C50, C53, C95, and C98 each coordinate Zn(2+).

The protein belongs to the Gfa family. The cofactor is Zn(2+).

The enzyme catalyses S-(hydroxymethyl)glutathione = glutathione + formaldehyde. It functions in the pathway one-carbon metabolism; formaldehyde degradation; formate from formaldehyde (glutathione route): step 1/3. Functionally, catalyzes the condensation of formaldehyde and glutathione to S-hydroxymethylglutathione. The protein is Putative glutathione-dependent formaldehyde-activating enzyme of Aspergillus flavus (strain ATCC 200026 / FGSC A1120 / IAM 13836 / NRRL 3357 / JCM 12722 / SRRC 167).